The primary structure comprises 655 residues: uncharacterized protein (655 aa).

The first 23 residues, 1-23 (MKRTIKYLSFLGLIPFLSITTIS), serve as a signal peptide directing secretion. C24 carries the N-palmitoyl cysteine lipid modification. C24 carries S-diacylglycerol cysteine lipidation.

It belongs to the MG067/MG068/MG395 family.

Its subcellular location is the cell membrane. This is an uncharacterized protein from Mycoplasma capricolum subsp. capricolum (strain California kid / ATCC 27343 / NCTC 10154).